A 214-amino-acid polypeptide reads, in one-letter code: Large ribosomal subunit protein uL3 (214 aa).

Gln-151 bears the N5-methylglutamine mark.

This sequence belongs to the universal ribosomal protein uL3 family. Part of the 50S ribosomal subunit. Forms a cluster with proteins L14 and L19. Post-translationally, methylated by PrmB.

Its function is as follows. One of the primary rRNA binding proteins, it binds directly near the 3'-end of the 23S rRNA, where it nucleates assembly of the 50S subunit. This chain is Large ribosomal subunit protein uL3, found in Saccharophagus degradans (strain 2-40 / ATCC 43961 / DSM 17024).